The sequence spans 335 residues: uncharacterized protein (335 aa).

The next 4 membrane-spanning stretches (helical) occupy residues 104 to 124 (FKKVVIYMIITFLALLFMGLL), 128 to 148 (LLQGFVNGLIGAGIILVLSLF), 280 to 300 (LAFGVGLILPFTGMILSTMIG), and 310 to 330 (TINLLLLKIGPLLTLIFGIFV).

It localises to the cell membrane. This is an uncharacterized protein from Methanocaldococcus jannaschii (strain ATCC 43067 / DSM 2661 / JAL-1 / JCM 10045 / NBRC 100440) (Methanococcus jannaschii).